Here is a 342-residue protein sequence, read N- to C-terminus: (+)-pulegone reductase (342 aa).

NADP(+)-binding positions include 163–166 (GSVG), K189, Y205, N229, 251–257 (CGMVSQY), 281–283 (FVV), and N331.

It belongs to the NADP-dependent oxidoreductase L4BD family.

The protein localises to the cytoplasm. The enzyme catalyses (2R,5R)-isomenthone + NADP(+) = (R)-pulegone + NADPH + H(+). It catalyses the reaction (1R,4S)-menthone + NADP(+) = (R)-pulegone + NADPH + H(+). It functions in the pathway secondary metabolite biosynthesis; terpenoid biosynthesis. Not inhibited by (+)-menthofuran. Monoterpene synthase that catalyzes the specific reduction of the 4,8-double bond of (+)-pulegone to produce both (-)-menthone and (+)-isomenthone in a 70:30 ratio. Unable to utilize either (-)-isopiperitenone or (+)-cis-isopulegone, or to catalyze the reverse reaction with (-)-menthone or (+)-isomenthone. Has an absolute requirement for NADPH. This Mentha piperita (Peppermint) protein is (+)-pulegone reductase.